A 354-amino-acid chain; its full sequence is Dual-specificity RNA methyltransferase RlmN (354 aa).

Glutamate 86 functions as the Proton acceptor in the catalytic mechanism. One can recognise a Radical SAM core domain in the interval 105–338 (RHARYTICVS…CTIRQSKGLD (234 aa)). Cysteines 112 and 343 form a disulfide. Residues cysteine 119, cysteine 123, and cysteine 126 each contribute to the [4Fe-4S] cluster site. S-adenosyl-L-methionine is bound by residues 169–170 (GE), serine 201, 224–226 (SLH), and asparagine 300. Catalysis depends on cysteine 343, which acts as the S-methylcysteine intermediate.

Belongs to the radical SAM superfamily. RlmN family. It depends on [4Fe-4S] cluster as a cofactor.

It is found in the cytoplasm. It carries out the reaction adenosine(2503) in 23S rRNA + 2 reduced [2Fe-2S]-[ferredoxin] + 2 S-adenosyl-L-methionine = 2-methyladenosine(2503) in 23S rRNA + 5'-deoxyadenosine + L-methionine + 2 oxidized [2Fe-2S]-[ferredoxin] + S-adenosyl-L-homocysteine. The catalysed reaction is adenosine(37) in tRNA + 2 reduced [2Fe-2S]-[ferredoxin] + 2 S-adenosyl-L-methionine = 2-methyladenosine(37) in tRNA + 5'-deoxyadenosine + L-methionine + 2 oxidized [2Fe-2S]-[ferredoxin] + S-adenosyl-L-homocysteine. Its function is as follows. Specifically methylates position 2 of adenine 2503 in 23S rRNA and position 2 of adenine 37 in tRNAs. m2A2503 modification seems to play a crucial role in the proofreading step occurring at the peptidyl transferase center and thus would serve to optimize ribosomal fidelity. The protein is Dual-specificity RNA methyltransferase RlmN of Campylobacter fetus subsp. fetus (strain 82-40).